We begin with the raw amino-acid sequence, 186 residues long: ATP synthase subunit delta (186 aa).

Belongs to the ATPase delta chain family. As to quaternary structure, F-type ATPases have 2 components, F(1) - the catalytic core - and F(0) - the membrane proton channel. F(1) has five subunits: alpha(3), beta(3), gamma(1), delta(1), epsilon(1). F(0) has three main subunits: a(1), b(2) and c(10-14). The alpha and beta chains form an alternating ring which encloses part of the gamma chain. F(1) is attached to F(0) by a central stalk formed by the gamma and epsilon chains, while a peripheral stalk is formed by the delta and b chains.

The protein resides in the cell inner membrane. Functionally, f(1)F(0) ATP synthase produces ATP from ADP in the presence of a proton or sodium gradient. F-type ATPases consist of two structural domains, F(1) containing the extramembraneous catalytic core and F(0) containing the membrane proton channel, linked together by a central stalk and a peripheral stalk. During catalysis, ATP synthesis in the catalytic domain of F(1) is coupled via a rotary mechanism of the central stalk subunits to proton translocation. Its function is as follows. This protein is part of the stalk that links CF(0) to CF(1). It either transmits conformational changes from CF(0) to CF(1) or is implicated in proton conduction. The polypeptide is ATP synthase subunit delta (Brucella suis biovar 1 (strain 1330)).